Reading from the N-terminus, the 1411-residue chain is ATP-dependent permease PDR11 (1411 aa).

Topologically, residues 2 to 388 (SLSKYFNPIP…IGDRNYLISQ (387 aa)) are cytoplasmic. Positions 31–273 (VQNDEESASE…FHDTLQIKKN (243 aa)) constitute an ABC transporter 1 domain. The helical transmembrane segment at 389–409 (FVSVVVQSLVIGSLFYNIPLT) threads the bilayer. Topologically, residues 410–418 (TIGSFSRGS) are extracellular. Residues 419–439 (LTFFSILFFTFLSLADMPASF) form a helical membrane-spanning segment. At 440–471 (QRQPVVRKHVQLHFYYNWVETLATNFFDCCSK) the chain is on the cytoplasmic side. Residues 472 to 492 (FILVVIFTIILYFLAHLQYNA) form a helical membrane-spanning segment. Over 493 to 494 (AR) the chain is Extracellular. The helical transmembrane segment at 495–515 (FFIFLLFLSVYNFCMVSLFAL) threads the bilayer. The Cytoplasmic segment spans residues 516–524 (TALIAPTLS). The helical transmembrane segment at 525-545 (MANLLAGILLLAIAMYASYVI) threads the bilayer. Over 546-636 (YMKDMHPWFI…YTYHHVWRNF (91 aa)) the chain is Extracellular. N595 is a glycosylation site (N-linked (GlcNAc...) asparagine). The helical transmembrane segment at 637–657 (GIIIGFLCFFLFCSLLAAEYI) threads the bilayer. Residues 658 to 1090 (TPLFTRENLL…QYICTKRDMT (433 aa)) lie on the Cytoplasmic side of the membrane. One can recognise an ABC transporter 2 domain in the interval 751–979 (ISWKNINYTI…FVAHDRRLTF (229 aa)). 782–789 (GESGAGKT) contacts ATP. A helical transmembrane segment spans residues 1091–1111 (YVFAKYALNAGAGLFIGFSFW). Residues 1112-1117 (RTKHNI) are Extracellular-facing. The chain crosses the membrane as a helical span at residues 1118–1138 (NGLQDAIFLCFMMLCVSSPLI). The Cytoplasmic segment spans residues 1139–1175 (NQVQDKALQSKEVYIAREARSNTYHWTVLLIAQTIVE). The helical transmembrane segment at 1176–1196 (LPLAISSSTLFFLCCYFCCGF) threads the bilayer. The Extracellular portion of the chain corresponds to 1197-1204 (ETSARVAG). The helical transmembrane segment at 1205–1225 (VFYLNYILFSMYYLSFGLWLL) threads the bilayer. The Cytoplasmic segment spans residues 1226 to 1230 (YSAPD). The helical transmembrane segment at 1231–1251 (LQTAAVFVAFLYSFTASFCGV) threads the bilayer. Residues 1252-1355 (MQPYSLFPRF…NMSYHHRWRN (104 aa)) are Extracellular-facing. 3 N-linked (GlcNAc...) asparagine glycosylation sites follow: N1289, N1324, and N1346. The chain crosses the membrane as a helical span at residues 1356–1376 (FGFEWVFVCFNIAAMFVGFYL). The Cytoplasmic segment spans residues 1377–1411 (TYIKKIWPSVIDGIKKCIPSMRRSKTSHNPNEQSV).

It belongs to the ABC transporter superfamily. ABCG family. PDR (TC 3.A.1.205) subfamily.

Its subcellular location is the membrane. In terms of biological role, transporter involved in the uptake of sterol. This Saccharomyces cerevisiae (strain ATCC 204508 / S288c) (Baker's yeast) protein is ATP-dependent permease PDR11 (PDR11).